The following is a 332-amino-acid chain: Very-long-chain 3-oxoacyl-CoA reductase (332 aa).

The chain crosses the membrane as a helical span at residues 15–35 (GQWALAGIGALYVATRVGAFL). 9 residues coordinate NADP(+): Val-60, Asp-115, Asp-123, Asn-142, Lys-177, Tyr-209, Lys-213, Val-242, and Thr-244. Tyr-209 serves as the catalytic Proton donor. Lys-213 serves as the catalytic Lowers pKa of active site Tyr.

This sequence belongs to the short-chain dehydrogenases/reductases (SDR) family.

It localises to the endoplasmic reticulum membrane. It catalyses the reaction a very-long-chain (3R)-3-hydroxyacyl-CoA + NADP(+) = a very-long-chain 3-oxoacyl-CoA + NADPH + H(+). It functions in the pathway lipid metabolism; fatty acid biosynthesis. Its function is as follows. Component of the microsomal membrane bound fatty acid elongation system, which produces the 26-carbon very long-chain fatty acids (VLCFA) from palmitate. Catalyzes the reduction of the 3-ketoacyl-CoA intermediate that is formed in each cycle of fatty acid elongation. VLCFAs serve as precursors for ceramide and sphingolipids. The sequence is that of Very-long-chain 3-oxoacyl-CoA reductase from Neurospora crassa (strain ATCC 24698 / 74-OR23-1A / CBS 708.71 / DSM 1257 / FGSC 987).